The sequence spans 319 residues: RWD domain-containing protein 2B (319 aa).

The RWD domain maps to 41-165 (AELDLLASMF…EWVREHASGY (125 aa)). A Phosphoserine modification is found at Ser275.

As to expression, ubiquitous.

In Homo sapiens (Human), this protein is RWD domain-containing protein 2B (RWDD2B).